The following is a 597-amino-acid chain: Aspartate--tRNA(Asp/Asn) ligase (597 aa).

An L-aspartate-binding site is contributed by glutamate 182. An aspartate region spans residues 206–209 (QLFK). Arginine 228 contacts L-aspartate. Residues 228–230 (RDE) and glutamine 237 contribute to the ATP site. Histidine 456 serves as a coordination point for L-aspartate. Glutamate 490 serves as a coordination point for ATP. Residue arginine 497 coordinates L-aspartate. Residue 542-545 (GFDR) coordinates ATP.

Belongs to the class-II aminoacyl-tRNA synthetase family. Type 1 subfamily. In terms of assembly, homodimer.

Its subcellular location is the cytoplasm. It catalyses the reaction tRNA(Asx) + L-aspartate + ATP = L-aspartyl-tRNA(Asx) + AMP + diphosphate. Functionally, aspartyl-tRNA synthetase with relaxed tRNA specificity since it is able to aspartylate not only its cognate tRNA(Asp) but also tRNA(Asn). Reaction proceeds in two steps: L-aspartate is first activated by ATP to form Asp-AMP and then transferred to the acceptor end of tRNA(Asp/Asn). This Desulfatibacillum aliphaticivorans protein is Aspartate--tRNA(Asp/Asn) ligase.